The chain runs to 298 residues: UDP-3-O-acyl-N-acetylglucosamine deacetylase (298 aa).

Residues His80, His239, and Asp243 each contribute to the Zn(2+) site. Catalysis depends on His266, which acts as the Proton donor.

Belongs to the LpxC family. Requires Zn(2+) as cofactor.

It catalyses the reaction a UDP-3-O-[(3R)-3-hydroxyacyl]-N-acetyl-alpha-D-glucosamine + H2O = a UDP-3-O-[(3R)-3-hydroxyacyl]-alpha-D-glucosamine + acetate. It functions in the pathway glycolipid biosynthesis; lipid IV(A) biosynthesis; lipid IV(A) from (3R)-3-hydroxytetradecanoyl-[acyl-carrier-protein] and UDP-N-acetyl-alpha-D-glucosamine: step 2/6. Its function is as follows. Catalyzes the hydrolysis of UDP-3-O-myristoyl-N-acetylglucosamine to form UDP-3-O-myristoylglucosamine and acetate, the committed step in lipid A biosynthesis. This chain is UDP-3-O-acyl-N-acetylglucosamine deacetylase, found in Blochmanniella floridana.